The primary structure comprises 744 residues: Translation initiation factor IF-2, chloroplastic (744 aa).

The segment at 113-146 (NSEGSFKSGKQKKKEKGKHKQNVNKDIHHTKNNR) is disordered. The span at 121 to 134 (GKQKKKEKGKHKQN) shows a compositional bias: basic residues. The tr-type G domain maps to 244–417 (NRAPIVTILG…CSLAEFINLK (174 aa)). The G1 stretch occupies residues 253 to 260 (GHVDHGKT). 253–260 (GHVDHGKT) is a binding site for GTP. The G2 stretch occupies residues 278-282 (GITQS). The G3 stretch occupies residues 303 to 306 (DTPG). GTP contacts are provided by residues 303–307 (DTPGH) and 357–360 (NKID). Residues 357–360 (NKID) are G4. The segment at 393–395 (SAL) is G5.

The protein belongs to the TRAFAC class translation factor GTPase superfamily. Classic translation factor GTPase family. IF-2 subfamily.

The protein localises to the plastid. Its subcellular location is the chloroplast. Its function is as follows. One of the essential components for the initiation of protein synthesis. Protects formylmethionyl-tRNA from spontaneous hydrolysis and promotes its binding to the 30S ribosomal subunits. Also involved in the hydrolysis of GTP during the formation of the 70S ribosomal complex. The chain is Translation initiation factor IF-2, chloroplastic (infB) from Gracilaria tenuistipitata var. liui (Red alga).